The following is a 246-amino-acid chain: 2-C-methyl-D-erythritol 4-phosphate cytidylyltransferase (246 aa).

The protein belongs to the IspD/TarI cytidylyltransferase family. IspD subfamily.

It catalyses the reaction 2-C-methyl-D-erythritol 4-phosphate + CTP + H(+) = 4-CDP-2-C-methyl-D-erythritol + diphosphate. Its pathway is isoprenoid biosynthesis; isopentenyl diphosphate biosynthesis via DXP pathway; isopentenyl diphosphate from 1-deoxy-D-xylulose 5-phosphate: step 2/6. Functionally, catalyzes the formation of 4-diphosphocytidyl-2-C-methyl-D-erythritol from CTP and 2-C-methyl-D-erythritol 4-phosphate (MEP). The protein is 2-C-methyl-D-erythritol 4-phosphate cytidylyltransferase of Chlorobaculum parvum (strain DSM 263 / NCIMB 8327) (Chlorobium vibrioforme subsp. thiosulfatophilum).